Consider the following 295-residue polypeptide: 33 kDa chaperonin (295 aa).

2 disulfides stabilise this stretch: C230–C232 and C264–C267.

It belongs to the HSP33 family. Under oxidizing conditions two disulfide bonds are formed involving the reactive cysteines. Under reducing conditions zinc is bound to the reactive cysteines and the protein is inactive.

The protein resides in the cytoplasm. Its function is as follows. Redox regulated molecular chaperone. Protects both thermally unfolding and oxidatively damaged proteins from irreversible aggregation. Plays an important role in the bacterial defense system toward oxidative stress. The polypeptide is 33 kDa chaperonin (Ectopseudomonas mendocina (strain ymp) (Pseudomonas mendocina)).